We begin with the raw amino-acid sequence, 200 residues long: NADH-quinone oxidoreductase subunit B 2 (200 aa).

[4Fe-4S] cluster contacts are provided by C79, C80, C144, and C174.

This sequence belongs to the complex I 20 kDa subunit family. As to quaternary structure, NDH-1 is composed of 14 different subunits. Subunits NuoB, C, D, E, F, and G constitute the peripheral sector of the complex. [4Fe-4S] cluster is required as a cofactor.

It is found in the cell inner membrane. The enzyme catalyses a quinone + NADH + 5 H(+)(in) = a quinol + NAD(+) + 4 H(+)(out). NDH-1 shuttles electrons from NADH, via FMN and iron-sulfur (Fe-S) centers, to quinones in the respiratory chain. The immediate electron acceptor for the enzyme in this species is believed to be ubiquinone. Couples the redox reaction to proton translocation (for every two electrons transferred, four hydrogen ions are translocated across the cytoplasmic membrane), and thus conserves the redox energy in a proton gradient. The polypeptide is NADH-quinone oxidoreductase subunit B 2 (Rhodopseudomonas palustris (strain BisA53)).